Reading from the N-terminus, the 419-residue chain is POU domain, class 4, transcription factor 1 (419 aa).

The POU-IV box motif lies at 57–66 (RAEALAAVDI). 2 disordered regions span residues 94-117 (STVPLAHHHHHHHHHQALEPGDLL) and 131-197 (AGGA…HSLG). Residues 99-108 (AHHHHHHHHH) are compositionally biased toward basic residues. The span at 131–184 (AGGAGAAAGGGGAHDGPGGGGGPGGGGGPGGGPGGGGGGGPGGGGGGPGGGLLG) shows a compositional bias: gly residues. One can recognise a POU-specific domain in the interval 261–338 (SDTDPRELEA…LQAWLEEAEG (78 aa)). A DNA-binding region (homeobox) is located at residues 356-415 (KRKRTSIAAPEKRSLEAYFAVQPRPSSEKIAAIAEKLDLKKNVVRVWFCNQRQKQKRMKF).

Belongs to the POU transcription factor family. Class-4 subfamily. In terms of assembly, interacts (via N-terminus) with RIT2; the interaction controls POU4F1 transactivation activity on some neuronal target genes. Isoform 1 interacts with POU4F2; this interaction inhibits both POU4F1 DNA-binding and transcriptional activities. Isoform 1 interacts (C-terminus) with ESR1 (via DNA-binding domain); this interaction decreases the estrogen receptor ESR1 transcriptional activity in a DNA- and ligand 17-beta-estradiol-independent manner. Expressed in the brain and the retina. Present in the developing brain, spinal cord and eye.

It localises to the nucleus. It is found in the cytoplasm. In terms of biological role, multifunctional transcription factor with different regions mediating its different effects. Acts by binding (via its C-terminal domain) to sequences related to the consensus octamer motif 5'-ATGCAAAT-3' in the regulatory regions of its target genes. Regulates the expression of specific genes involved in differentiation and survival within a subset of neuronal lineages. It has been shown that activation of some of these genes requires its N-terminal domain, maybe through a neuronal-specific cofactor. Activates BCL2 expression and protects neuronal cells from apoptosis (via the N-terminal domain). Induces neuronal process outgrowth and the coordinate expression of genes encoding synaptic proteins. Exerts its major developmental effects in somatosensory neurons and in brainstem nuclei involved in motor control. Stimulates the binding affinity of the nuclear estrogene receptor ESR1 to DNA estrogen response element (ERE), and hence modulates ESR1-induced transcriptional activity. May positively regulate POU4F2 and POU4F3. Regulates dorsal root ganglion sensory neuron specification and axonal projection into the spinal cord. Plays a role in TNFSF11-mediated terminal osteoclast differentiation. Negatively regulates its own expression interacting directly with a highly conserved autoregulatory domain surrounding the transcription initiation site. Functionally, able to act as transcription factor, cannot regulate the expression of the same subset of genes than isoform 1. Does not have antiapoptotic effect on neuronal cells. This Homo sapiens (Human) protein is POU domain, class 4, transcription factor 1.